Consider the following 237-residue polypeptide: Octanoyltransferase (237 aa).

The region spanning 27–210 (SGGDDILLLL…EFYHIFQPAG (184 aa)) is the BPL/LPL catalytic domain. Substrate-binding positions include 72–79 (RGGNVTCH), 139–141 (SLG), and 152–154 (GMA). C170 functions as the Acyl-thioester intermediate in the catalytic mechanism.

Belongs to the LipB family.

It localises to the cytoplasm. The catalysed reaction is octanoyl-[ACP] + L-lysyl-[protein] = N(6)-octanoyl-L-lysyl-[protein] + holo-[ACP] + H(+). It functions in the pathway protein modification; protein lipoylation via endogenous pathway; protein N(6)-(lipoyl)lysine from octanoyl-[acyl-carrier-protein]: step 1/2. Functionally, catalyzes the transfer of endogenously produced octanoic acid from octanoyl-acyl-carrier-protein onto the lipoyl domains of lipoate-dependent enzymes. Lipoyl-ACP can also act as a substrate although octanoyl-ACP is likely to be the physiological substrate. This is Octanoyltransferase from Desulfovibrio desulfuricans (strain ATCC 27774 / DSM 6949 / MB).